The following is a 442-amino-acid chain: MSAPSALVKQPPIQSTAGACPSRNEKGRAVYGEGEGETVCVGKAAADYVPMESSEEEDEEFQFIKKAKEQEVEPEEQEEEVANDPRLRRLLQNRITEDVEERLARHRKIVEPEVVSGESDSEVEGEAWRVEREDTSEEEEEEIDDEEIERWRGMMRQRAQERKTEELEVMELEDEGRSGEESELESEYEEYTDSEDEMEPRLKPVFIRKKDRITVQEREAEALKQKELEQEAKRLAEERRKYTLKIVEEEAKKELEENKRSLAALDALDTDDENDEEEYEAWKVRELKRIKRDREEREAMEKEKAEIERMRNLTEEERRAELRANGKVVTNKAVKGKYKFLQKYYHRGAFFMDEDEEVYKRDFSAPTLEDHFNKTILPKVMQVKNFGRSGRTKYTHLVDQDTTSFDSAWGQESAQNTKFFKQKAAGVRDVFERPSAKKRKTT.

Disordered stretches follow at residues 1–34 and 113–203; these read MSAP…YGEG and EVVS…PRLK. 2 stretches are compositionally biased toward acidic residues: residues 134–148 and 181–198; these read DTSE…DEEI and ESEL…EDEM.

This sequence belongs to the MFAP1 family. Component of the spliceosome B complex. Interacts with PRPF38A (via N-terminal interaction domain). In terms of tissue distribution, widely expressed.

It is found in the nucleus. Functionally, involved in pre-mRNA splicing as a component of the spliceosome. This is Microfibrillar-associated protein 1 from Gallus gallus (Chicken).